A 344-amino-acid chain; its full sequence is Anthranilate phosphoribosyltransferase (344 aa).

Residues Gly-80, 83–84 (GD), Thr-88, 90–93 (NIST), 108–116 (KHGNRSISS), and Ser-120 contribute to the 5-phospho-alpha-D-ribose 1-diphosphate site. Gly-80 serves as a coordination point for anthranilate. Mg(2+) is bound at residue Ser-92. Asn-111 provides a ligand contact to anthranilate. Arg-166 lines the anthranilate pocket. Positions 229 and 230 each coordinate Mg(2+).

It belongs to the anthranilate phosphoribosyltransferase family. Homodimer. Requires Mg(2+) as cofactor.

The enzyme catalyses N-(5-phospho-beta-D-ribosyl)anthranilate + diphosphate = 5-phospho-alpha-D-ribose 1-diphosphate + anthranilate. The protein operates within amino-acid biosynthesis; L-tryptophan biosynthesis; L-tryptophan from chorismate: step 2/5. Its function is as follows. Catalyzes the transfer of the phosphoribosyl group of 5-phosphorylribose-1-pyrophosphate (PRPP) to anthranilate to yield N-(5'-phosphoribosyl)-anthranilate (PRA). This chain is Anthranilate phosphoribosyltransferase, found in Chloroherpeton thalassium (strain ATCC 35110 / GB-78).